Consider the following 83-residue polypeptide: Exodeoxyribonuclease 7 small subunit (83 aa).

It belongs to the XseB family. Heterooligomer composed of large and small subunits.

It localises to the cytoplasm. It catalyses the reaction Exonucleolytic cleavage in either 5'- to 3'- or 3'- to 5'-direction to yield nucleoside 5'-phosphates.. Functionally, bidirectionally degrades single-stranded DNA into large acid-insoluble oligonucleotides, which are then degraded further into small acid-soluble oligonucleotides. This Bradyrhizobium sp. (strain BTAi1 / ATCC BAA-1182) protein is Exodeoxyribonuclease 7 small subunit.